The sequence spans 122 residues: Large ribosomal subunit protein uL14 (122 aa).

The protein belongs to the universal ribosomal protein uL14 family. As to quaternary structure, part of the 50S ribosomal subunit. Forms a cluster with proteins L3 and L19. In the 70S ribosome, L14 and L19 interact and together make contacts with the 16S rRNA in bridges B5 and B8.

In terms of biological role, binds to 23S rRNA. Forms part of two intersubunit bridges in the 70S ribosome. This Pseudomonas paraeruginosa (strain DSM 24068 / PA7) (Pseudomonas aeruginosa (strain PA7)) protein is Large ribosomal subunit protein uL14.